The chain runs to 780 residues: Cullin-1 (780 aa).

One can recognise a Cullin neddylation domain in the interval 710–771 (DRKSVISACI…EKEYMLRTEG (62 aa)). A Glycyl lysine isopeptide (Lys-Gly) (interchain with G-Cter in NEDD8) cross-link involves residue K724.

Belongs to the cullin family. Component of an SCF (SKP1-CUL1-F-box protein) E3 ubiquitin ligase complex composed of cul-1, fsn-1, rpm-1 and skr-1. Interacts with Skp1-related proteins skr-1, skr-2, skr-3, skr-4, skr-7, skr-8, skr-9 and skr-10. Post-translationally, neddylated; which enhances the ubiquitination activity of SCF. In terms of tissue distribution, ubiquitous.

It is found in the cytoplasm. The protein operates within protein modification; protein ubiquitination. Probable core component of multiple cullin-RING-based SCF (SKP1-CUL1-F-box) E3 ubiquitin-protein ligase complexes which mediate the ubiquitination and subsequent proteasomal degradation of target proteins. As a scaffold protein may contribute to catalysis through positioning of the substrate and the ubiquitin-conjugating enzyme. Required for developmentally programmed transitions from the G1 phase of the cell cycle to the G0 phase or the apoptotic pathway. The polypeptide is Cullin-1 (cul-1) (Caenorhabditis elegans).